The primary structure comprises 108 residues: UPF0060 membrane protein CC_1976 (108 aa).

4 helical membrane passes run 4-24 (FAIY…FWAW), 27-47 (LGKS…FALL), 59-79 (AFAA…QVVE), and 85-105 (RWDL…LFGP).

It belongs to the UPF0060 family.

Its subcellular location is the cell inner membrane. The sequence is that of UPF0060 membrane protein CC_1976 from Caulobacter vibrioides (strain ATCC 19089 / CIP 103742 / CB 15) (Caulobacter crescentus).